The chain runs to 289 residues: Ribosomal RNA small subunit methyltransferase A (289 aa).

S-adenosyl-L-methionine is bound by residues N33, V35, G60, E81, D111, and N130.

It belongs to the class I-like SAM-binding methyltransferase superfamily. rRNA adenine N(6)-methyltransferase family. RsmA subfamily.

It localises to the cytoplasm. It catalyses the reaction adenosine(1518)/adenosine(1519) in 16S rRNA + 4 S-adenosyl-L-methionine = N(6)-dimethyladenosine(1518)/N(6)-dimethyladenosine(1519) in 16S rRNA + 4 S-adenosyl-L-homocysteine + 4 H(+). Functionally, specifically dimethylates two adjacent adenosines (A1518 and A1519) in the loop of a conserved hairpin near the 3'-end of 16S rRNA in the 30S particle. May play a critical role in biogenesis of 30S subunits. This chain is Ribosomal RNA small subunit methyltransferase A, found in Corynebacterium efficiens (strain DSM 44549 / YS-314 / AJ 12310 / JCM 11189 / NBRC 100395).